Here is a 119-residue protein sequence, read N- to C-terminus: Non-specific lipid-transfer protein 3 (119 aa).

The signal sequence occupies residues 1-24; that stretch reads MARSMKLACVVLAMCMLVAPMAEA. Disulfide bonds link Cys28–Cys77, Cys38–Cys54, Cys55–Cys100, and Cys75–Cys114.

The protein belongs to the plant LTP family. In terms of tissue distribution, expressed in roots, stem, leaves and tendrils of the mature plant.

Functionally, plant non-specific lipid-transfer proteins transfer phospholipids as well as galactolipids across membranes. May play a role in wax or cutin deposition in the cell walls of expanding epidermal cells and certain secretory tissues. This is Non-specific lipid-transfer protein 3 from Pisum sativum (Garden pea).